A 152-amino-acid polypeptide reads, in one-letter code: Large ribosomal subunit protein uL15 (152 aa).

The tract at residues 1–66 (MLQLHTIKPN…PLHRRLPKKG (66 aa)) is disordered. Residues 24–36 (ESSGLGKTCGKGN) show a composition bias toward gly residues.

This sequence belongs to the universal ribosomal protein uL15 family. In terms of assembly, part of the 50S ribosomal subunit.

Its function is as follows. Binds to the 23S rRNA. This is Large ribosomal subunit protein uL15 from Akkermansia muciniphila (strain ATCC BAA-835 / DSM 22959 / JCM 33894 / BCRC 81048 / CCUG 64013 / CIP 107961 / Muc).